The primary structure comprises 105 residues: Small ribosomal subunit protein uS10 (105 aa).

The protein belongs to the universal ribosomal protein uS10 family. Part of the 30S ribosomal subunit.

Functionally, involved in the binding of tRNA to the ribosomes. This is Small ribosomal subunit protein uS10 from Synechococcus sp. (strain JA-2-3B'a(2-13)) (Cyanobacteria bacterium Yellowstone B-Prime).